We begin with the raw amino-acid sequence, 631 residues long: Tail sheath protein (631 aa).

Belongs to the myoviridae tail sheath protein family. In terms of assembly, homomultimer.

It is found in the virion. Its subcellular location is the host cytoplasm. Functionally, polymerizes as an extended structure around the baseplate-tail tube complex. During ejection, the sheath shifts to a contracted form, thereby making the inner tail tube protrude through the host cell envelope. In Salmonella typhi, this protein is Tail sheath protein.